Here is a 288-residue protein sequence, read N- to C-terminus: Polyamine aminopropyltransferase (288 aa).

Residues 9–238 (ETLHDQFGQY…GIMTFAWATD (230 aa)) enclose the PABS domain. Glutamine 33 provides a ligand contact to S-methyl-5'-thioadenosine. The spermidine site is built by histidine 64 and aspartate 88. Residues glutamate 108 and 140–141 (DG) contribute to the S-methyl-5'-thioadenosine site. Catalysis depends on aspartate 158, which acts as the Proton acceptor. Residue 158–161 (DCTD) participates in spermidine binding. Proline 165 provides a ligand contact to S-methyl-5'-thioadenosine.

Belongs to the spermidine/spermine synthase family. Homodimer or homotetramer.

The protein resides in the cytoplasm. It carries out the reaction S-adenosyl 3-(methylsulfanyl)propylamine + putrescine = S-methyl-5'-thioadenosine + spermidine + H(+). It participates in amine and polyamine biosynthesis; spermidine biosynthesis; spermidine from putrescine: step 1/1. Catalyzes the irreversible transfer of a propylamine group from the amino donor S-adenosylmethioninamine (decarboxy-AdoMet) to putrescine (1,4-diaminobutane) to yield spermidine. This is Polyamine aminopropyltransferase from Escherichia coli O81 (strain ED1a).